Consider the following 156-residue polypeptide: SsrA-binding protein (156 aa).

This sequence belongs to the SmpB family.

The protein localises to the cytoplasm. Functionally, required for rescue of stalled ribosomes mediated by trans-translation. Binds to transfer-messenger RNA (tmRNA), required for stable association of tmRNA with ribosomes. tmRNA and SmpB together mimic tRNA shape, replacing the anticodon stem-loop with SmpB. tmRNA is encoded by the ssrA gene; the 2 termini fold to resemble tRNA(Ala) and it encodes a 'tag peptide', a short internal open reading frame. During trans-translation Ala-aminoacylated tmRNA acts like a tRNA, entering the A-site of stalled ribosomes, displacing the stalled mRNA. The ribosome then switches to translate the ORF on the tmRNA; the nascent peptide is terminated with the 'tag peptide' encoded by the tmRNA and targeted for degradation. The ribosome is freed to recommence translation, which seems to be the essential function of trans-translation. The sequence is that of SsrA-binding protein from Trichodesmium erythraeum (strain IMS101).